Here is a 509-residue protein sequence, read N- to C-terminus: ATP synthase subunit alpha (509 aa).

Residue 169–176 (GDRQTGKT) participates in ATP binding.

Belongs to the ATPase alpha/beta chains family. F-type ATPases have 2 components, CF(1) - the catalytic core - and CF(0) - the membrane proton channel. CF(1) has five subunits: alpha(3), beta(3), gamma(1), delta(1), epsilon(1). CF(0) has three main subunits: a(1), b(2) and c(9-12). The alpha and beta chains form an alternating ring which encloses part of the gamma chain. CF(1) is attached to CF(0) by a central stalk formed by the gamma and epsilon chains, while a peripheral stalk is formed by the delta and b chains.

The protein localises to the cell inner membrane. The enzyme catalyses ATP + H2O + 4 H(+)(in) = ADP + phosphate + 5 H(+)(out). Functionally, produces ATP from ADP in the presence of a proton gradient across the membrane. The alpha chain is a regulatory subunit. The protein is ATP synthase subunit alpha of Rhizobium johnstonii (strain DSM 114642 / LMG 32736 / 3841) (Rhizobium leguminosarum bv. viciae).